The chain runs to 227 residues: Cytochrome c oxidase subunit 2 (227 aa).

The Mitochondrial intermembrane portion of the chain corresponds to 1–14; sequence MAHATQVGLQDATS. A helical membrane pass occupies residues 15–45; sequence PIMEELISFHDHALMIIFLISFLVLYALFLT. Residues 46-59 lie on the Mitochondrial matrix side of the membrane; the sequence is LTTKLTNTNITDAQ. Residues 60–87 traverse the membrane as a helical segment; the sequence is EMETVWTILPAIILVLIALPSLRILYLT. Residues 88–227 lie on the Mitochondrial intermembrane side of the membrane; it reads DEINDPSFTI…IFEMGPVFTL (140 aa). Cu cation contacts are provided by H161, C196, E198, C200, H204, and M207. E198 contacts Mg(2+).

The protein belongs to the cytochrome c oxidase subunit 2 family. Component of the cytochrome c oxidase (complex IV, CIV), a multisubunit enzyme composed of 14 subunits. The complex is composed of a catalytic core of 3 subunits MT-CO1, MT-CO2 and MT-CO3, encoded in the mitochondrial DNA, and 11 supernumerary subunits COX4I, COX5A, COX5B, COX6A, COX6B, COX6C, COX7A, COX7B, COX7C, COX8 and NDUFA4, which are encoded in the nuclear genome. The complex exists as a monomer or a dimer and forms supercomplexes (SCs) in the inner mitochondrial membrane with NADH-ubiquinone oxidoreductase (complex I, CI) and ubiquinol-cytochrome c oxidoreductase (cytochrome b-c1 complex, complex III, CIII), resulting in different assemblies (supercomplex SCI(1)III(2)IV(1) and megacomplex MCI(2)III(2)IV(2)). Found in a complex with TMEM177, COA6, COX18, COX20, SCO1 and SCO2. Interacts with TMEM177 in a COX20-dependent manner. Interacts with COX20. Interacts with COX16. It depends on Cu cation as a cofactor.

It localises to the mitochondrion inner membrane. It carries out the reaction 4 Fe(II)-[cytochrome c] + O2 + 8 H(+)(in) = 4 Fe(III)-[cytochrome c] + 2 H2O + 4 H(+)(out). Its function is as follows. Component of the cytochrome c oxidase, the last enzyme in the mitochondrial electron transport chain which drives oxidative phosphorylation. The respiratory chain contains 3 multisubunit complexes succinate dehydrogenase (complex II, CII), ubiquinol-cytochrome c oxidoreductase (cytochrome b-c1 complex, complex III, CIII) and cytochrome c oxidase (complex IV, CIV), that cooperate to transfer electrons derived from NADH and succinate to molecular oxygen, creating an electrochemical gradient over the inner membrane that drives transmembrane transport and the ATP synthase. Cytochrome c oxidase is the component of the respiratory chain that catalyzes the reduction of oxygen to water. Electrons originating from reduced cytochrome c in the intermembrane space (IMS) are transferred via the dinuclear copper A center (CU(A)) of subunit 2 and heme A of subunit 1 to the active site in subunit 1, a binuclear center (BNC) formed by heme A3 and copper B (CU(B)). The BNC reduces molecular oxygen to 2 water molecules using 4 electrons from cytochrome c in the IMS and 4 protons from the mitochondrial matrix. The chain is Cytochrome c oxidase subunit 2 (MT-CO2) from Hylobates lar (Lar gibbon).